The primary structure comprises 425 residues: Formyl-CoA:oxalate CoA-transferase (425 aa).

CoA-binding positions include 17 to 18 (QS), arginine 38, 72 to 75 (LDTK), 96 to 98 (NFG), arginine 104, and 136 to 139 (KVYE). Residue aspartate 168 is the Nucleophile of the active site. 247–249 (GGQ) lines the substrate pocket.

Belongs to the CoA-transferase III family. Frc subfamily. In terms of assembly, homodimer.

The enzyme catalyses formyl-CoA + oxalate = oxalyl-CoA + formate. Its pathway is metabolic intermediate degradation; oxalate degradation; CO(2) and formate from oxalate: step 1/2. Its function is as follows. Involved in the catabolism of oxalate and in the adapatation to low pH via the induction of the oxalate-dependent acid tolerance response (ATR). Catalyzes the transfer of the CoA moiety from formyl-CoA to oxalate. The protein is Formyl-CoA:oxalate CoA-transferase of Rhodopseudomonas palustris (strain HaA2).